The primary structure comprises 953 residues: 26S proteasome non-ATPase regulatory subunit 1 (953 aa).

An N-acetylmethionine modification is found at methionine 1. Position 273 is a phosphothreonine (threonine 273). Positions 277-319 (SVPGSTNTGTVPGSEKDSDPMETEEKTASAVAGKTPDASPEPK) are disordered. Serine 290 bears the Phosphoserine mark. Residues 290–303 (SEKDSDPMETEEKT) are compositionally biased toward basic and acidic residues. Lysine 310 carries the N6-acetyllysine modification. Threonine 311 carries the phosphothreonine modification. At serine 315 the chain carries Phosphoserine. 10 PC repeats span residues 403 to 436 (TATA…PGSA), 441 to 474 (GGLY…DIVR), 476 to 510 (GGSL…VTGE), 511 to 545 (AAGL…EKIL), 547 to 580 (GLAV…ILRR), 581 to 616 (SGMY…DVRR), 617 to 649 (AAVE…PHVR), 651 to 685 (GAAM…YVRQ), 686 to 726 (GALI…DVMA), and 729 to 761 (GAIL…PSVV). Position 720 is an N6-acetyllysine (lysine 720). Threonine 830 is modified (phosphothreonine). Serine 834 carries the post-translational modification Phosphoserine. Disordered stretches follow at residues 839–881 (AKKK…LDNP) and 930–953 (AHGP…YIDD). 2 stretches are compositionally biased toward basic and acidic residues: residues 842-852 (KEKEKEKKEEE) and 859-872 (AEKK…KEPE). Over residues 936–953 (EEEEQEPEPPEPFEYIDD) the composition is skewed to acidic residues.

The protein belongs to the proteasome subunit S1 family. In terms of assembly, component of the 19S proteasome regulatory particle complex. The 26S proteasome consists of a 20S core particle (CP) and two 19S regulatory subunits (RP). The regulatory particle is made of a lid composed of 9 subunits, a base containing 6 ATPases and few additional components including PSMD1. Interacts with ADRM1. Interacts with ZFAND1.

Functionally, component of the 26S proteasome, a multiprotein complex involved in the ATP-dependent degradation of ubiquitinated proteins. This complex plays a key role in the maintenance of protein homeostasis by removing misfolded or damaged proteins, which could impair cellular functions, and by removing proteins whose functions are no longer required. Therefore, the proteasome participates in numerous cellular processes, including cell cycle progression, apoptosis, or DNA damage repair. The protein is 26S proteasome non-ATPase regulatory subunit 1 (Psmd1) of Mus musculus (Mouse).